Here is a 59-residue protein sequence, read N- to C-terminus: Pycsar effector protein MePycTM (59 aa).

A helical transmembrane segment spans residues 36–56 (VAVAIYLLGAAMLSSGAAVLA).

Its subcellular location is the cell membrane. Pycsar (pyrimidine cyclase system for antiphage resistance) provides immunity against bacteriophage. The pyrimidine cyclase (PycC) synthesizes cyclic nucleotides in response to infection; these serve as specific second messenger signals. The signals activate the adjacent effector, leading to bacterial cell death and abortive phage infection. A clade D Pycsar system. Functionally, the effector gene of a two-gene Pycsar system. Expression of this and adjacent uridylate cyclase MePycC (AC A0A1C5G2V9) probably confers resistance to bacteriophage. The genes are probably only expressed in response to bacteriophage infection. Probably only responds to cUMP (produced by its cognate NTP cyclase), acts by impairing membrane integrity. This chain is Pycsar effector protein MePycTM, found in Micromonospora echinofusca.